We begin with the raw amino-acid sequence, 125 residues long: Large ribosomal subunit protein bL12 (125 aa).

Belongs to the bacterial ribosomal protein bL12 family. Homodimer. Part of the ribosomal stalk of the 50S ribosomal subunit. Forms a multimeric L10(L12)X complex, where L10 forms an elongated spine to which 2 to 4 L12 dimers bind in a sequential fashion. Binds GTP-bound translation factors.

Functionally, forms part of the ribosomal stalk which helps the ribosome interact with GTP-bound translation factors. Is thus essential for accurate translation. The polypeptide is Large ribosomal subunit protein bL12 (Francisella tularensis subsp. novicida (strain U112)).